We begin with the raw amino-acid sequence, 218 residues long: uncharacterized protein (218 aa).

5 consecutive transmembrane segments (helical) span residues 28 to 48 (ILLF…LSGL), 66 to 86 (FDIG…WKPL), 92 to 112 (LGTL…TKIL), 122 to 142 (MIFC…YLTC), and 173 to 193 (ISVC…TVLF).

It localises to the cell membrane. This is an uncharacterized protein from Haemophilus influenzae (strain ATCC 51907 / DSM 11121 / KW20 / Rd).